Here is a 180-residue protein sequence, read N- to C-terminus: Large ribosomal subunit protein uL5 (180 aa).

This sequence belongs to the universal ribosomal protein uL5 family. As to quaternary structure, part of the 50S ribosomal subunit; part of the 5S rRNA/L5/L18/L25 subcomplex. Contacts the 5S rRNA and the P site tRNA. Forms a bridge to the 30S subunit in the 70S ribosome.

Functionally, this is one of the proteins that bind and probably mediate the attachment of the 5S RNA into the large ribosomal subunit, where it forms part of the central protuberance. In the 70S ribosome it contacts protein S13 of the 30S subunit (bridge B1b), connecting the 2 subunits; this bridge is implicated in subunit movement. Contacts the P site tRNA; the 5S rRNA and some of its associated proteins might help stabilize positioning of ribosome-bound tRNAs. This chain is Large ribosomal subunit protein uL5, found in Leuconostoc mesenteroides subsp. mesenteroides (strain ATCC 8293 / DSM 20343 / BCRC 11652 / CCM 1803 / JCM 6124 / NCDO 523 / NBRC 100496 / NCIMB 8023 / NCTC 12954 / NRRL B-1118 / 37Y).